The primary structure comprises 1109 residues: DNA mismatch repair protein MSH7 (1109 aa).

Disordered regions lie at residues 19–45 (TKGLVSGDAASGGGGSGGPRFNVKEGD) and 61–86 (DEVRGTDTPPEKVPRRVLPSGFKPAE). The segment covering 61–74 (DEVRGTDTPPEKVP) has biased composition (basic and acidic residues). 853–860 (GPNMGGKS) is a binding site for ATP.

It belongs to the DNA mismatch repair MutS family. In terms of assembly, heterodimer consisting of MSH2-MSH7 (MutS gamma).

It is found in the nucleus. Component of the post-replicative DNA mismatch repair system (MMR). Forms the heterodimer MutS gamma (MSH2-MSH7 heterodimer) which binds to DNA mismatches thereby initiating DNA repair. MutS gamma recognizes specifically the T/G single base mismatch, but not trinucleotide insertion-deletion loops (IDL). The protein is DNA mismatch repair protein MSH7 (MSH7) of Arabidopsis thaliana (Mouse-ear cress).